The chain runs to 232 residues: LexA repressor (232 aa).

Residues 35 to 55 (IREIGDAAGLQSTSSVAYQLK) constitute a DNA-binding region (H-T-H motif). The segment covering 61–85 (GFLRRDPNKPRAVDVRHLPETESRS) has biased composition (basic and acidic residues). The disordered stretch occupies residues 61 to 104 (GFLRRDPNKPRAVDVRHLPETESRSSKAATQAKSKAPQAGVHDP). Residues 86–99 (SKAATQAKSKAPQA) show a composition bias toward low complexity. Active-site for autocatalytic cleavage activity residues include Ser-156 and Lys-193.

Belongs to the peptidase S24 family. As to quaternary structure, homodimer.

It carries out the reaction Hydrolysis of Ala-|-Gly bond in repressor LexA.. Its function is as follows. Represses a number of genes involved in the response to DNA damage (SOS response), including recA and lexA. In the presence of single-stranded DNA, RecA interacts with LexA causing an autocatalytic cleavage which disrupts the DNA-binding part of LexA, leading to derepression of the SOS regulon and eventually DNA repair. The protein is LexA repressor of Corynebacterium glutamicum (strain ATCC 13032 / DSM 20300 / JCM 1318 / BCRC 11384 / CCUG 27702 / LMG 3730 / NBRC 12168 / NCIMB 10025 / NRRL B-2784 / 534).